The following is a 421-amino-acid chain: Histidine--tRNA ligase (421 aa).

Belongs to the class-II aminoacyl-tRNA synthetase family. As to quaternary structure, homodimer.

The protein localises to the cytoplasm. The enzyme catalyses tRNA(His) + L-histidine + ATP = L-histidyl-tRNA(His) + AMP + diphosphate + H(+). This Francisella tularensis subsp. mediasiatica (strain FSC147) protein is Histidine--tRNA ligase.